The following is a 238-amino-acid chain: Small ribosomal subunit protein uS2 (238 aa).

Belongs to the universal ribosomal protein uS2 family.

The sequence is that of Small ribosomal subunit protein uS2 from Chloroflexus aurantiacus (strain ATCC 29366 / DSM 635 / J-10-fl).